The sequence spans 426 residues: Cuticle-degrading serine protease (426 aa).

The signal sequence occupies residues 1–21; that stretch reads MLTNGLISLLAIAGLATNAFA. Positions 22 to 123 are excised as a propeptide; sequence GPIRKVSNAG…VEQDTVVTTY (102 aa). An Inhibitor I9 domain is found at 39–122; that stretch reads KYIVVLKKGL…YVEQDTVVTT (84 aa). Positions 130–426 constitute a Peptidase S8 domain; that stretch reads TWGLDRISHE…TNHQVTIVAS (297 aa). Catalysis depends on Asp-164, which acts as the Charge relay system. N-linked (GlcNAc...) asparagine glycosylation is present at Asn-178. His-200 (charge relay system) is an active-site residue. The N-linked (GlcNAc...) asparagine glycan is linked to Asn-252. Ser-353 functions as the Charge relay system in the catalytic mechanism.

It belongs to the peptidase S8 family.

Its subcellular location is the secreted. Inhibited by PMSF, SSI, the peptide Phe-Val and by Phe, but not by EDTA. Its function is as follows. Hydrolyzes gelatin, casein, the chromogenic substrate azocoll and the cuticle of the nematode P.redivivus. Immobilizes P.redivivus. This Orbilia oligospora (Nematode-trapping fungus) protein is Cuticle-degrading serine protease.